An 85-amino-acid polypeptide reads, in one-letter code: Photosystem I reaction center subunit PsaK (85 aa).

2 helical membrane-spanning segments follow: residues 12–34 and 54–76; these read TVTW…IAVG and GGMG…IGAI.

Belongs to the PsaG/PsaK family.

It localises to the cellular thylakoid membrane. This Parasynechococcus marenigrum (strain WH8102) protein is Photosystem I reaction center subunit PsaK.